A 255-amino-acid polypeptide reads, in one-letter code: Phosphate import ATP-binding protein PstB (255 aa).

The 242-residue stretch at 9–250 folds into the ABC transporter domain; the sequence is MYAQGLQFYY…PRNKQTEDYI (242 aa). 41 to 48 contributes to the ATP binding site; sequence GPSGCGKS.

Belongs to the ABC transporter superfamily. Phosphate importer (TC 3.A.1.7) family. The complex is composed of two ATP-binding proteins (PstB), two transmembrane proteins (PstC and PstA) and a solute-binding protein (PstS).

It localises to the cell inner membrane. It catalyses the reaction phosphate(out) + ATP + H2O = ADP + 2 phosphate(in) + H(+). Part of the ABC transporter complex PstSACB involved in phosphate import. Responsible for energy coupling to the transport system. This Nitratidesulfovibrio vulgaris (strain ATCC 29579 / DSM 644 / CCUG 34227 / NCIMB 8303 / VKM B-1760 / Hildenborough) (Desulfovibrio vulgaris) protein is Phosphate import ATP-binding protein PstB.